A 542-amino-acid polypeptide reads, in one-letter code: Valine N-monooxygenase 1 (542 aa).

At 1 to 21 (MAMNVSTTIGLLNATSFASSS) the chain is on the cytoplasmic side. The chain crosses the membrane as a helical; Signal-anchor for type II membrane protein span at residues 22–42 (SINTVKILFVTLFISIVSTIV). The Lumenal portion of the chain corresponds to 43 to 542 (KLQKSAANKE…LAPHLYPTSP (500 aa)). A glycan (N-linked (GlcNAc...) asparagine) is linked at Asn-278. Position 478 (Cys-478) interacts with heme. N-linked (GlcNAc...) asparagine glycosylation is present at Asn-506.

This sequence belongs to the cytochrome P450 family. It depends on heme as a cofactor. In terms of tissue distribution, expressed in the epidermis, the next two cortex cell layers, the endodermis and the pericycle of leaf petioles. Strong expression around the laticifers among the phloem cells and in parenchymatic cells between the protoxylem and the metaxylem cells. In the leaves, preferentially expressed in the mesophyll cells adjacent to the epidermis.

The protein resides in the microsome membrane. It carries out the reaction L-valine + 2 reduced [NADPH--hemoprotein reductase] + 2 O2 = (E)-2-methylpropanal oxime + 2 oxidized [NADPH--hemoprotein reductase] + CO2 + 3 H2O + 2 H(+). The enzyme catalyses L-valine + reduced [NADPH--hemoprotein reductase] + O2 = N-hydroxy-L-valine + oxidized [NADPH--hemoprotein reductase] + H2O + 2 H(+). The catalysed reaction is N-hydroxy-L-valine + reduced [NADPH--hemoprotein reductase] + O2 = N,N-dihydroxy-L-valine + oxidized [NADPH--hemoprotein reductase] + H2O + H(+). It catalyses the reaction L-isoleucine + 2 reduced [NADPH--hemoprotein reductase] + 2 O2 = (1E,2S)-2-methylbutanal oxime + 2 oxidized [NADPH--hemoprotein reductase] + CO2 + 3 H2O + 2 H(+). It carries out the reaction L-isoleucine + reduced [NADPH--hemoprotein reductase] + O2 = N-hydroxy-L-isoleucine + oxidized [NADPH--hemoprotein reductase] + H2O + 2 H(+). The enzyme catalyses N-hydroxy-L-isoleucine + reduced [NADPH--hemoprotein reductase] + O2 = N,N-dihydroxy-L-isoleucine + oxidized [NADPH--hemoprotein reductase] + H2O + H(+). The protein operates within secondary metabolite biosynthesis. Inhibited by tetcyclasis but not by 1-aminobenzotriazole (ABT). In terms of biological role, involved in the biosynthesis of the cyanogenic glucosides linamarin and lotaustralin. Can use L-valine or L-isoleucine as substrate, but not L-leucine, L-phenylalanine, L-tyrosine, D-valine or D-isoleucine. Catalyzes multi-step reactions starting with two successive N-hydroxylations using L-valine and L-isoleucine as substrates leading to the formation of N,N-dihydroxy-L-valine and N,N-dihydroxy-L-isoleucine, respectively; following spontaneous reactions lead to the production of (E)-2-methylpropanal oxime and (1E,2S)-2-methylbutanal oxime, respectively. In Manihot esculenta (Cassava), this protein is Valine N-monooxygenase 1.